The chain runs to 561 residues: Liver carboxylesterase B-1 (561 aa).

Positions 1-18 are cleaved as a signal peptide; sequence MCLRSLFLVSLATCVVCG. N-linked (GlcNAc...) asparagine glycosylation occurs at Asn79. An intrachain disulfide couples Cys87 to Cys116. The active-site Acyl-ester intermediate is Ser221. Cys273 and Cys284 are joined by a disulfide. Residues Glu353 and His466 each act as charge relay system in the active site. A Prevents secretion from ER motif is present at residues 558 to 561; that stretch reads HNEL.

This sequence belongs to the type-B carboxylesterase/lipase family. As to quaternary structure, monomer.

It localises to the endoplasmic reticulum lumen. The catalysed reaction is a carboxylic ester + H2O = an alcohol + a carboxylate + H(+). Involved in the detoxification of xenobiotics and in the activation of ester and amide prodrugs. This Rattus norvegicus (Rat) protein is Liver carboxylesterase B-1.